Here is a 267-residue protein sequence, read N- to C-terminus: Phosphatidylglycerol--prolipoprotein diacylglyceryl transferase (267 aa).

Transmembrane regions (helical) follow at residues 20–40 (LEIR…VYLA), 57–77 (FILI…VAFS), 88–108 (IFAI…GAIV), and 117–137 (FINT…AQAI). Residue Arg139 coordinates a 1,2-diacyl-sn-glycero-3-phospho-(1'-sn-glycerol). A run of 3 helical transmembrane segments spans residues 175–195 (QPTF…VCVL), 205–225 (GEIT…IEGL), and 235–255 (IRVS…MVVL).

Belongs to the Lgt family.

The protein resides in the cell membrane. It carries out the reaction L-cysteinyl-[prolipoprotein] + a 1,2-diacyl-sn-glycero-3-phospho-(1'-sn-glycerol) = an S-1,2-diacyl-sn-glyceryl-L-cysteinyl-[prolipoprotein] + sn-glycerol 1-phosphate + H(+). The protein operates within protein modification; lipoprotein biosynthesis (diacylglyceryl transfer). Catalyzes the transfer of the diacylglyceryl group from phosphatidylglycerol to the sulfhydryl group of the N-terminal cysteine of a prolipoprotein, the first step in the formation of mature lipoproteins. The chain is Phosphatidylglycerol--prolipoprotein diacylglyceryl transferase from Streptococcus suis (strain 98HAH33).